Consider the following 172-residue polypeptide: Translation initiation factor IF-3 (172 aa).

This sequence belongs to the IF-3 family. As to quaternary structure, monomer.

It localises to the cytoplasm. IF-3 binds to the 30S ribosomal subunit and shifts the equilibrium between 70S ribosomes and their 50S and 30S subunits in favor of the free subunits, thus enhancing the availability of 30S subunits on which protein synthesis initiation begins. The sequence is that of Translation initiation factor IF-3 from Campylobacter jejuni subsp. doylei (strain ATCC BAA-1458 / RM4099 / 269.97).